A 189-amino-acid chain; its full sequence is Small ribosomal subunit protein uS5 (189 aa).

One can recognise an S5 DRBM domain in the interval 22–85 (FVDKLVAINR…EAAKRELIFV (64 aa)).

This sequence belongs to the universal ribosomal protein uS5 family. Part of the 30S ribosomal subunit. Contacts proteins S4 and S8.

Functionally, with S4 and S12 plays an important role in translational accuracy. Its function is as follows. Located at the back of the 30S subunit body where it stabilizes the conformation of the head with respect to the body. The chain is Small ribosomal subunit protein uS5 from Rhizobium johnstonii (strain DSM 114642 / LMG 32736 / 3841) (Rhizobium leguminosarum bv. viciae).